Consider the following 479-residue polypeptide: Kynurenine 3-monooxygenase (479 aa).

It belongs to the aromatic-ring hydroxylase family. KMO subfamily. FAD is required as a cofactor.

The protein resides in the mitochondrion outer membrane. It carries out the reaction L-kynurenine + NADPH + O2 + H(+) = 3-hydroxy-L-kynurenine + NADP(+) + H2O. Its pathway is cofactor biosynthesis; NAD(+) biosynthesis; quinolinate from L-kynurenine: step 1/3. Catalyzes the hydroxylation of L-kynurenine (L-Kyn) to form 3-hydroxy-L-kynurenine (L-3OHKyn). Required for synthesis of quinolinic acid. This is Kynurenine 3-monooxygenase from Chaetomium globosum (strain ATCC 6205 / CBS 148.51 / DSM 1962 / NBRC 6347 / NRRL 1970) (Soil fungus).